The primary structure comprises 178 residues: Interleukin-10 (178 aa).

Residues 1–18 form the signal peptide; that stretch reads MHSSALLCCLVFLTGVRA. Intrachain disulfides connect C30–C126 and C80–C132. N134 is a glycosylation site (N-linked (GlcNAc...) asparagine).

The protein belongs to the IL-10 family. As to quaternary structure, homodimer. Interacts with IL10RA and IL10RB.

It localises to the secreted. Major immune regulatory cytokine that acts on many cells of the immune system where it has profound anti-inflammatory functions, limiting excessive tissue disruption caused by inflammation. Mechanistically, IL10 binds to its heterotetrameric receptor comprising IL10RA and IL10RB leading to JAK1 and STAT2-mediated phosphorylation of STAT3. In turn, STAT3 translocates to the nucleus where it drives expression of anti-inflammatory mediators. Targets antigen-presenting cells (APCs) such as macrophages and monocytes and inhibits their release of pro-inflammatory cytokines including granulocyte-macrophage colony-stimulating factor /GM-CSF, granulocyte colony-stimulating factor/G-CSF, IL-1 alpha, IL-1 beta, IL-6, IL-8 and TNF-alpha. Also interferes with antigen presentation by reducing the expression of MHC-class II and co-stimulatory molecules, thereby inhibiting their ability to induce T cell activation. In addition, controls the inflammatory response of macrophages by reprogramming essential metabolic pathways including mTOR signaling. The protein is Interleukin-10 (IL10) of Callithrix jacchus (White-tufted-ear marmoset).